Reading from the N-terminus, the 1486-residue chain is Chromosome partition protein MukB (1486 aa).

Position 34–41 (34–41) interacts with ATP; the sequence is GGNGAGKS. 3 coiled-coil regions span residues 326–418, 444–480, and 509–603; these read LEAD…QYNQ, LETF…QAYQ, and RHLA…RAPV. Positions 666 to 783 are flexible hinge; that stretch reads PGGSEDQRLN…EVPLFGRAAR (118 aa). Coiled-coil stretches lie at residues 835-923, 977-1115, and 1209-1266; these read EAEI…AKLE, EMLS…TAKA, and VEAI…QNVS.

This sequence belongs to the SMC family. MukB subfamily. As to quaternary structure, homodimerization via its hinge domain. Binds to DNA via its C-terminal region. Interacts, and probably forms a ternary complex, with MukE and MukF via its C-terminal region. The complex formation is stimulated by calcium or magnesium. Interacts with tubulin-related protein FtsZ.

The protein resides in the cytoplasm. The protein localises to the nucleoid. Its function is as follows. Plays a central role in chromosome condensation, segregation and cell cycle progression. Functions as a homodimer, which is essential for chromosome partition. Involved in negative DNA supercoiling in vivo, and by this means organize and compact chromosomes. May achieve or facilitate chromosome segregation by condensation DNA from both sides of a centrally located replisome during cell division. This is Chromosome partition protein MukB from Escherichia coli O127:H6 (strain E2348/69 / EPEC).